A 170-amino-acid chain; its full sequence is Cytochrome b6-f complex subunit 4 (170 aa).

Transmembrane regions (helical) follow at residues leucine 46 to valine 66, leucine 105 to glutamate 125, and threonine 141 to leucine 161.

Belongs to the cytochrome b family. PetD subfamily. The 4 large subunits of the cytochrome b6-f complex are cytochrome b6, subunit IV (17 kDa polypeptide, PetD), cytochrome f and the Rieske protein, while the 4 small subunits are PetG, PetL, PetM and PetN. The complex functions as a dimer.

The protein localises to the cellular thylakoid membrane. In terms of biological role, component of the cytochrome b6-f complex, which mediates electron transfer between photosystem II (PSII) and photosystem I (PSI), cyclic electron flow around PSI, and state transitions. This Synechococcus sp. (strain JA-2-3B'a(2-13)) (Cyanobacteria bacterium Yellowstone B-Prime) protein is Cytochrome b6-f complex subunit 4.